The sequence spans 486 residues: Differentially expressed in FDCP 8 homolog (486 aa).

Residues 1–26 (MSSWCSSEDAHNQSSTPSTRSRKSSW) form a disordered region. 2 Phorbol-ester/DAG-type zinc fingers span residues 160-212 (GHEF…KRVC) and 393-459 (IHTV…SLNC).

This sequence belongs to the DEF8 family.

In Caenorhabditis elegans, this protein is Differentially expressed in FDCP 8 homolog.